Consider the following 117-residue polypeptide: Large ribosomal subunit protein uL22 (117 aa).

The protein belongs to the universal ribosomal protein uL22 family. Part of the 50S ribosomal subunit.

In terms of biological role, this protein binds specifically to 23S rRNA; its binding is stimulated by other ribosomal proteins, e.g. L4, L17, and L20. It is important during the early stages of 50S assembly. It makes multiple contacts with different domains of the 23S rRNA in the assembled 50S subunit and ribosome. Functionally, the globular domain of the protein is located near the polypeptide exit tunnel on the outside of the subunit, while an extended beta-hairpin is found that lines the wall of the exit tunnel in the center of the 70S ribosome. This chain is Large ribosomal subunit protein uL22, found in Chlorobium phaeobacteroides (strain BS1).